A 278-amino-acid chain; its full sequence is Transmembrane protein 45B (278 aa).

7 helical membrane-spanning segments follow: residues 7 to 27, 49 to 69, 95 to 115, 117 to 137, 149 to 169, 183 to 203, and 215 to 235; these read HALP…KYPL, IIEG…EQFV, YLFF…FHIV, LGLD…LFYF, IHSL…LEVI, LLIL…PPFG, and IMFI…IVAI. Residues Ser273 and Ser275 each carry the phosphoserine modification.

It belongs to the TMEM45 family.

It localises to the endosome membrane. The protein localises to the lysosome membrane. The protein resides in the golgi apparatus. It is found in the trans-Golgi network membrane. Plays a role in innate immunity. The chain is Transmembrane protein 45B (Tmem45b) from Mus musculus (Mouse).